Consider the following 874-residue polypeptide: Alanine--tRNA ligase (874 aa).

Positions 564, 568, 665, and 669 each coordinate Zn(2+).

The protein belongs to the class-II aminoacyl-tRNA synthetase family. Zn(2+) serves as cofactor.

Its subcellular location is the cytoplasm. The catalysed reaction is tRNA(Ala) + L-alanine + ATP = L-alanyl-tRNA(Ala) + AMP + diphosphate. Its function is as follows. Catalyzes the attachment of alanine to tRNA(Ala) in a two-step reaction: alanine is first activated by ATP to form Ala-AMP and then transferred to the acceptor end of tRNA(Ala). Also edits incorrectly charged Ser-tRNA(Ala) and Gly-tRNA(Ala) via its editing domain. The polypeptide is Alanine--tRNA ligase (Paraburkholderia phytofirmans (strain DSM 17436 / LMG 22146 / PsJN) (Burkholderia phytofirmans)).